Here is a 334-residue protein sequence, read N- to C-terminus: 6-phosphogluconolactonase (334 aa).

Belongs to the cycloisomerase 2 family.

It catalyses the reaction 6-phospho-D-glucono-1,5-lactone + H2O = 6-phospho-D-gluconate + H(+). Its pathway is carbohydrate degradation; pentose phosphate pathway; D-ribulose 5-phosphate from D-glucose 6-phosphate (oxidative stage): step 2/3. Functionally, catalyzes the hydrolysis of 6-phosphogluconolactone to 6-phosphogluconate. This chain is 6-phosphogluconolactonase, found in Yersinia pseudotuberculosis serotype O:1b (strain IP 31758).